The sequence spans 301 residues: General transcription and DNA repair factor IIH subunit TFB4 (301 aa).

A C4-type zinc finger spans residues 259–276 (CSVCLSIFCEHHKKCSTC).

Belongs to the TFB4 family. As to quaternary structure, component of the 7-subunit TFIIH core complex composed of XPB, XPD, TFB1/GTF2H1, GTF2H2/P44, TFB4/GTF2H3, TFB2/GTF2H4 and TFB5/GTF2H5, which is active in NER. The core complex associates with the 3-subunit CDK-activating kinase (CAK) module composed of CYCH1/cyclin H1, CDKD and MAT1/At4g30820 to form the 10-subunit holoenzyme (holo-TFIIH) active in transcription.

It localises to the nucleus. Component of the general transcription and DNA repair factor IIH (TFIIH) core complex, which is involved in general and transcription-coupled nucleotide excision repair (NER) of damaged DNA and, when complexed to CAK, in RNA transcription by RNA polymerase II. In NER, TFIIH acts by opening DNA around the lesion to allow the excision of the damaged oligonucleotide and its replacement by a new DNA fragment. In transcription, TFIIH has an essential role in transcription initiation. When the pre-initiation complex (PIC) has been established, TFIIH is required for promoter opening and promoter escape. Phosphorylation of the C-terminal tail (CTD) of the largest subunit of RNA polymerase II by the kinase module CAK controls the initiation of transcription. The sequence is that of General transcription and DNA repair factor IIH subunit TFB4 from Arabidopsis thaliana (Mouse-ear cress).